A 404-amino-acid polypeptide reads, in one-letter code: DNA gyrase subunit B (404 aa).

Residues 321-404 (SEIYIVEGDS…VIIMTDADVD (84 aa)) form the Toprim domain. Mg(2+) contacts are provided by Glu327, Asp400, and Asp402.

It belongs to the type II topoisomerase GyrB family. Heterotetramer, composed of two GyrA and two GyrB chains. In the heterotetramer, GyrA contains the active site tyrosine that forms a transient covalent intermediate with DNA, while GyrB binds cofactors and catalyzes ATP hydrolysis. It depends on Mg(2+) as a cofactor. Requires Mn(2+) as cofactor. Ca(2+) is required as a cofactor.

It localises to the cytoplasm. The enzyme catalyses ATP-dependent breakage, passage and rejoining of double-stranded DNA.. Functionally, a type II topoisomerase that negatively supercoils closed circular double-stranded (ds) DNA in an ATP-dependent manner to modulate DNA topology and maintain chromosomes in an underwound state. Negative supercoiling favors strand separation, and DNA replication, transcription, recombination and repair, all of which involve strand separation. Also able to catalyze the interconversion of other topological isomers of dsDNA rings, including catenanes and knotted rings. Type II topoisomerases break and join 2 DNA strands simultaneously in an ATP-dependent manner. The chain is DNA gyrase subunit B (gyrB) from Bacillus cereus.